A 159-amino-acid chain; its full sequence is Ribosomal RNA large subunit methyltransferase H (159 aa).

Residues Leu-76, Gly-108, and 127-132 (FGRLTY) contribute to the S-adenosyl-L-methionine site.

The protein belongs to the RNA methyltransferase RlmH family. As to quaternary structure, homodimer.

It localises to the cytoplasm. The catalysed reaction is pseudouridine(1915) in 23S rRNA + S-adenosyl-L-methionine = N(3)-methylpseudouridine(1915) in 23S rRNA + S-adenosyl-L-homocysteine + H(+). Functionally, specifically methylates the pseudouridine at position 1915 (m3Psi1915) in 23S rRNA. The protein is Ribosomal RNA large subunit methyltransferase H of Enterococcus faecalis (strain ATCC 700802 / V583).